The chain runs to 264 residues: Hydroxyethylthiazole kinase (264 aa).

A substrate-binding site is contributed by Met-43. ATP contacts are provided by Lys-119 and Ser-165. Gly-192 is a substrate binding site.

Belongs to the Thz kinase family. Mg(2+) serves as cofactor.

It catalyses the reaction 5-(2-hydroxyethyl)-4-methylthiazole + ATP = 4-methyl-5-(2-phosphooxyethyl)-thiazole + ADP + H(+). It functions in the pathway cofactor biosynthesis; thiamine diphosphate biosynthesis; 4-methyl-5-(2-phosphoethyl)-thiazole from 5-(2-hydroxyethyl)-4-methylthiazole: step 1/1. Catalyzes the phosphorylation of the hydroxyl group of 4-methyl-5-beta-hydroxyethylthiazole (THZ). The chain is Hydroxyethylthiazole kinase from Methanocorpusculum labreanum (strain ATCC 43576 / DSM 4855 / Z).